The sequence spans 66 residues: Large ribosomal subunit protein bL33c (66 aa).

It belongs to the bacterial ribosomal protein bL33 family.

It localises to the plastid. It is found in the chloroplast. The polypeptide is Large ribosomal subunit protein bL33c (Drimys granadensis).